The following is a 537-amino-acid chain: Beta-arabinofuranosyltransferase RAY1 (537 aa).

The DXD motif motif lies at 370-372 (DVD).

It belongs to the glycosyltransferase 77 family.

Functionally, beta-arabinofuranosyltransferase that transfers specifically an arabinosyl residue from UDP-arabinofuranose to the monosaccharide galactose or beta-methyl-galactoside in vitro. Catalyzes the addition of a beta-arabinofuranose residue onto a beta-galactosyl residue of an Yariv-precipitable wall polymer in vivo. The sequence is that of Beta-arabinofuranosyltransferase RAY1 from Arabidopsis thaliana (Mouse-ear cress).